The sequence spans 545 residues: CTP synthase (545 aa).

Positions 1–266 (MTTNYIFVTG…DDYICKRFSL (266 aa)) are amidoligase domain. Residue S14 coordinates CTP. Residue S14 participates in UTP binding. Residues 15–20 (SLGKGI) and D72 each bind ATP. Mg(2+) contacts are provided by D72 and E140. CTP is bound by residues 147 to 149 (DIE), 187 to 192 (KTKPTQ), and K223. UTP contacts are provided by residues 187–192 (KTKPTQ) and K223. Position 239 to 241 (239 to 241 (KDV)) interacts with ATP. A Glutamine amidotransferase type-1 domain is found at 291-542 (TIGMVGKYIE…VKAASEYQKR (252 aa)). Residue G352 coordinates L-glutamine. The active-site Nucleophile; for glutamine hydrolysis is C379. L-glutamine is bound by residues 380–383 (LGMQ), E403, and R470. Residues H515 and E517 contribute to the active site.

Belongs to the CTP synthase family. Homotetramer.

The catalysed reaction is UTP + L-glutamine + ATP + H2O = CTP + L-glutamate + ADP + phosphate + 2 H(+). It catalyses the reaction L-glutamine + H2O = L-glutamate + NH4(+). It carries out the reaction UTP + NH4(+) + ATP = CTP + ADP + phosphate + 2 H(+). The protein operates within pyrimidine metabolism; CTP biosynthesis via de novo pathway; CTP from UDP: step 2/2. Its activity is regulated as follows. Allosterically activated by GTP, when glutamine is the substrate; GTP has no effect on the reaction when ammonia is the substrate. The allosteric effector GTP functions by stabilizing the protein conformation that binds the tetrahedral intermediate(s) formed during glutamine hydrolysis. Inhibited by the product CTP, via allosteric rather than competitive inhibition. In terms of biological role, catalyzes the ATP-dependent amination of UTP to CTP with either L-glutamine or ammonia as the source of nitrogen. Regulates intracellular CTP levels through interactions with the four ribonucleotide triphosphates. The polypeptide is CTP synthase (Citrobacter koseri (strain ATCC BAA-895 / CDC 4225-83 / SGSC4696)).